A 373-amino-acid chain; its full sequence is Alanine racemase (373 aa).

The active-site Proton acceptor; specific for D-alanine is the Lys40. At Lys40 the chain carries N6-(pyridoxal phosphate)lysine. Arg140 provides a ligand contact to substrate. Tyr268 functions as the Proton acceptor; specific for L-alanine in the catalytic mechanism. Residue Met315 participates in substrate binding.

It belongs to the alanine racemase family. Pyridoxal 5'-phosphate serves as cofactor.

It catalyses the reaction L-alanine = D-alanine. It functions in the pathway amino-acid biosynthesis; D-alanine biosynthesis; D-alanine from L-alanine: step 1/1. In terms of biological role, catalyzes the interconversion of L-alanine and D-alanine. May also act on other amino acids. The protein is Alanine racemase (alr) of Levilactobacillus brevis (strain ATCC 367 / BCRC 12310 / CIP 105137 / JCM 1170 / LMG 11437 / NCIMB 947 / NCTC 947) (Lactobacillus brevis).